A 109-amino-acid chain; its full sequence is uncharacterized protein (109 aa).

Residues 75-95 (LHFFFLFWLLNFILFFRIHLY) form a helical membrane-spanning segment.

Its subcellular location is the membrane. This is an uncharacterized protein from Schizosaccharomyces pombe (strain 972 / ATCC 24843) (Fission yeast).